A 358-amino-acid polypeptide reads, in one-letter code: Aminomethyltransferase (358 aa).

The protein belongs to the GcvT family. As to quaternary structure, the glycine cleavage system is composed of four proteins: P, T, L and H.

It catalyses the reaction N(6)-[(R)-S(8)-aminomethyldihydrolipoyl]-L-lysyl-[protein] + (6S)-5,6,7,8-tetrahydrofolate = N(6)-[(R)-dihydrolipoyl]-L-lysyl-[protein] + (6R)-5,10-methylene-5,6,7,8-tetrahydrofolate + NH4(+). The glycine cleavage system catalyzes the degradation of glycine. The sequence is that of Aminomethyltransferase from Francisella tularensis subsp. tularensis (strain WY96-3418).